An 853-amino-acid polypeptide reads, in one-letter code: DNA mismatch repair protein MutS (853 aa).

614–621 (GPNMGGKS) contributes to the ATP binding site.

The protein belongs to the DNA mismatch repair MutS family.

In terms of biological role, this protein is involved in the repair of mismatches in DNA. It is possible that it carries out the mismatch recognition step. This protein has a weak ATPase activity. This Klebsiella pneumoniae subsp. pneumoniae (strain ATCC 700721 / MGH 78578) protein is DNA mismatch repair protein MutS.